The chain runs to 496 residues: Cytochrome P450 3A30 (496 aa).

Position 441 (C441) interacts with heme.

It belongs to the cytochrome P450 family. The cofactor is heme. Highly expressed in liver and intestine. Moderate expression in gill and spleen. Low expression in kidney, brain and heart.

The protein localises to the endoplasmic reticulum membrane. The protein resides in the microsome membrane. The catalysed reaction is an organic molecule + reduced [NADPH--hemoprotein reductase] + O2 = an alcohol + oxidized [NADPH--hemoprotein reductase] + H2O + H(+). Its function is as follows. Putative steroid 6-beta-hydroxylase. The sequence is that of Cytochrome P450 3A30 (cyp3a30) from Fundulus heteroclitus (Killifish).